A 180-amino-acid chain; its full sequence is Probable phospholipid hydroperoxide glutathione peroxidase (180 aa).

Cysteine 54 is an active-site residue.

The protein belongs to the glutathione peroxidase family.

The protein localises to the cytoplasm. The enzyme catalyses a hydroperoxy polyunsaturated fatty acid + 2 glutathione = a hydroxy polyunsaturated fatty acid + glutathione disulfide + H2O. In terms of biological role, protects cells and enzymes from oxidative damage, by catalyzing the reduction of hydrogen peroxide, lipid peroxides and organic hydroperoxide, by glutathione. This Helianthus annuus (Common sunflower) protein is Probable phospholipid hydroperoxide glutathione peroxidase (GPXHA-2).